The sequence spans 382 residues: ATP phosphoribosyltransferase regulatory subunit (382 aa).

Belongs to the class-II aminoacyl-tRNA synthetase family. HisZ subfamily. In terms of assembly, heteromultimer composed of HisG and HisZ subunits.

The protein localises to the cytoplasm. It participates in amino-acid biosynthesis; L-histidine biosynthesis; L-histidine from 5-phospho-alpha-D-ribose 1-diphosphate: step 1/9. In terms of biological role, required for the first step of histidine biosynthesis. May allow the feedback regulation of ATP phosphoribosyltransferase activity by histidine. In Lacticaseibacillus paracasei (strain ATCC 334 / BCRC 17002 / CCUG 31169 / CIP 107868 / KCTC 3260 / NRRL B-441) (Lactobacillus paracasei), this protein is ATP phosphoribosyltransferase regulatory subunit.